Reading from the N-terminus, the 165-residue chain is uncharacterized protein (165 aa).

The 86-residue stretch at 76 to 161 (LEQVESALDD…LKRLIREKLT (86 aa)) folds into the RCK C-terminal domain.

This is an uncharacterized protein from Bacillus subtilis (strain 168).